The sequence spans 213 residues: Guanylate kinase (213 aa).

Positions 12-190 (GLCLVVAAPS…AIDQVRTILH (179 aa)) constitute a Guanylate kinase-like domain. 19-26 (APSGAGKS) contributes to the ATP binding site.

Belongs to the guanylate kinase family.

The protein localises to the cytoplasm. It carries out the reaction GMP + ATP = GDP + ADP. Its function is as follows. Essential for recycling GMP and indirectly, cGMP. This is Guanylate kinase from Granulibacter bethesdensis (strain ATCC BAA-1260 / CGDNIH1).